The chain runs to 345 residues: Anthranilate phosphoribosyltransferase (345 aa).

5-phospho-alpha-D-ribose 1-diphosphate is bound by residues Gly86, 89 to 90, Thr94, 96 to 99, 114 to 122, and Ser126; these read GD, NIST, and KHGGRGVSS. Residue Gly86 coordinates anthranilate. Ser98 serves as a coordination point for Mg(2+). Arg172 lines the anthranilate pocket. Mg(2+)-binding residues include Asp231 and Glu232.

The protein belongs to the anthranilate phosphoribosyltransferase family. As to quaternary structure, homodimer. Mg(2+) serves as cofactor.

It catalyses the reaction N-(5-phospho-beta-D-ribosyl)anthranilate + diphosphate = 5-phospho-alpha-D-ribose 1-diphosphate + anthranilate. The protein operates within amino-acid biosynthesis; L-tryptophan biosynthesis; L-tryptophan from chorismate: step 2/5. Functionally, catalyzes the transfer of the phosphoribosyl group of 5-phosphorylribose-1-pyrophosphate (PRPP) to anthranilate to yield N-(5'-phosphoribosyl)-anthranilate (PRA). The chain is Anthranilate phosphoribosyltransferase from Ralstonia pickettii (strain 12J).